The chain runs to 232 residues: Vesicle transport through interaction with t-SNAREs homolog 1B (232 aa).

Residue Ala2 is modified to N-acetylalanine. Interaction with CLINT1 regions lie at residues 2–23 (ASSAASSEHFEKLHEIFRGLHE) and 69–73 (APLSF). The Cytoplasmic portion of the chain corresponds to 2-208 (ASSAASSEHF…SRKVTTNKLL (207 aa)). Residues 35 to 98 (TAGTEEKKKL…AKLHREVRST (64 aa)) are a coiled coil. At Thr103 the chain carries Phosphothreonine. Position 107 is an omega-N-methylarginine (Arg107). Phosphoserine is present on Ser138. Residues 161–198 (SEIIEELGEQRDQLERTKSRLVNTSENLSKSRKILRSM) adopt a coiled-coil conformation. A helical; Anchor for type IV membrane protein membrane pass occupies residues 209 to 229 (LSIIILLELAILGGLVYYKFF). Topologically, residues 230–232 (RSH) are vesicular.

This sequence belongs to the VTI1 family. Forms a SNARE complex with STX7, STX8 and VAMP8 which functions in the homotypic fusion of late endosomes. Component of the SNARE complex composed of STX7, STX8, VAMP7 and VIT1B that is required for heterotypic fusion of late endosomes with lysosomes. May interact with STX17. Interacts with CLINT1. In terms of tissue distribution, expressed in all tissues examined.

It is found in the early endosome membrane. Its subcellular location is the late endosome membrane. The protein resides in the lysosome membrane. It localises to the cytoplasmic granule. The protein localises to the recycling endosome membrane. V-SNARE that mediates vesicle transport pathways through interactions with t-SNAREs on the target membrane. These interactions are proposed to mediate aspects of the specificity of vesicle trafficking and to promote fusion of the lipid bilayers. May be concerned with increased secretion of cytokines associated with cellular senescence. In Homo sapiens (Human), this protein is Vesicle transport through interaction with t-SNAREs homolog 1B (VTI1B).